A 326-amino-acid chain; its full sequence is Aspartate carbamoyltransferase catalytic subunit (326 aa).

Positions 60 and 61 each coordinate carbamoyl phosphate. Residue Lys88 coordinates L-aspartate. Residues Arg110, His143, and Gln146 each contribute to the carbamoyl phosphate site. L-aspartate-binding residues include Arg183 and Arg239. Positions 280 and 281 each coordinate carbamoyl phosphate.

The protein belongs to the aspartate/ornithine carbamoyltransferase superfamily. ATCase family. As to quaternary structure, heterododecamer (2C3:3R2) of six catalytic PyrB chains organized as two trimers (C3), and six regulatory PyrI chains organized as three dimers (R2).

It catalyses the reaction carbamoyl phosphate + L-aspartate = N-carbamoyl-L-aspartate + phosphate + H(+). Its pathway is pyrimidine metabolism; UMP biosynthesis via de novo pathway; (S)-dihydroorotate from bicarbonate: step 2/3. In terms of biological role, catalyzes the condensation of carbamoyl phosphate and aspartate to form carbamoyl aspartate and inorganic phosphate, the committed step in the de novo pyrimidine nucleotide biosynthesis pathway. This is Aspartate carbamoyltransferase catalytic subunit from Microcystis aeruginosa (strain NIES-843 / IAM M-2473).